Consider the following 185-residue polypeptide: Putative manganese efflux pump MntP (185 aa).

The next 6 helical transmembrane spans lie at 4-24 (LTSS…ALAI), 36-56 (ALVI…AGWI), 65-85 (ISSY…IKMI), 105-125 (VILL…SFGV), 130-150 (VLMP…AGVF), and 165-185 (IFGG…ILPL).

The protein belongs to the MntP (TC 9.B.29) family.

It localises to the cell membrane. Functionally, probably functions as a manganese efflux pump. In Methanoregula boonei (strain DSM 21154 / JCM 14090 / 6A8), this protein is Putative manganese efflux pump MntP.